Reading from the N-terminus, the 207-residue chain is Dephospho-CoA kinase (207 aa).

Residues 12–207 (LIGITGMIGG…LYSTLLGKML (196 aa)) form the DPCK domain. Residue 20–25 (GGGKST) participates in ATP binding.

It belongs to the CoaE family.

The protein resides in the cytoplasm. The enzyme catalyses 3'-dephospho-CoA + ATP = ADP + CoA + H(+). It participates in cofactor biosynthesis; coenzyme A biosynthesis; CoA from (R)-pantothenate: step 5/5. Catalyzes the phosphorylation of the 3'-hydroxyl group of dephosphocoenzyme A to form coenzyme A. The protein is Dephospho-CoA kinase of Leptospira interrogans serogroup Icterohaemorrhagiae serovar copenhageni (strain Fiocruz L1-130).